The following is a 621-amino-acid chain: 1-deoxy-D-xylulose-5-phosphate synthase (621 aa).

Thiamine diphosphate contacts are provided by residues histidine 80 and 121-123; that span reads GHS. Position 152 (aspartate 152) interacts with Mg(2+). Residues 153–154, asparagine 181, tyrosine 288, and glutamate 370 contribute to the thiamine diphosphate site; that span reads GA. Asparagine 181 is a Mg(2+) binding site.

It belongs to the transketolase family. DXPS subfamily. As to quaternary structure, homodimer. The cofactor is Mg(2+). Thiamine diphosphate serves as cofactor.

The catalysed reaction is D-glyceraldehyde 3-phosphate + pyruvate + H(+) = 1-deoxy-D-xylulose 5-phosphate + CO2. It participates in metabolic intermediate biosynthesis; 1-deoxy-D-xylulose 5-phosphate biosynthesis; 1-deoxy-D-xylulose 5-phosphate from D-glyceraldehyde 3-phosphate and pyruvate: step 1/1. In terms of biological role, catalyzes the acyloin condensation reaction between C atoms 2 and 3 of pyruvate and glyceraldehyde 3-phosphate to yield 1-deoxy-D-xylulose-5-phosphate (DXP). The sequence is that of 1-deoxy-D-xylulose-5-phosphate synthase from Vibrio parahaemolyticus serotype O3:K6 (strain RIMD 2210633).